The primary structure comprises 100 residues: MTPWYLYLIRTADNALYTGITTDVARRYKQHQSGKGAKALRGKGELTLAFSAQVGERSLALRMEYRIKRLTKRQKERLVTEGEGFEALLASLQTPTLKSD.

The region spanning 2 to 77 (TPWYLYLIRT…KRLTKRQKER (76 aa)) is the GIY-YIG domain.

This sequence belongs to the UPF0213 family.

This chain is UPF0213 protein CKO_04549, found in Citrobacter koseri (strain ATCC BAA-895 / CDC 4225-83 / SGSC4696).